The primary structure comprises 240 residues: tRNA (guanine-N(1)-)-methyltransferase (240 aa).

S-adenosyl-L-methionine contacts are provided by residues G110 and 129-134 (LGDFVL).

Belongs to the RNA methyltransferase TrmD family. In terms of assembly, homodimer.

The protein resides in the cytoplasm. It catalyses the reaction guanosine(37) in tRNA + S-adenosyl-L-methionine = N(1)-methylguanosine(37) in tRNA + S-adenosyl-L-homocysteine + H(+). Its function is as follows. Specifically methylates guanosine-37 in various tRNAs. This Clostridium botulinum (strain Loch Maree / Type A3) protein is tRNA (guanine-N(1)-)-methyltransferase.